The sequence spans 148 residues: U5-hexatoxin-Hi1a (148 aa).

Residues 1–21 form the signal peptide; sequence MNFSVVAVALVVVLTVHFTDG. A propeptide spanning residues 22-38 is cleaved from the precursor; the sequence is QETSSSLPSPPSPLPGR. Positions 125–148 are disordered; it reads TPSTTVTTPTPTTETPTTETPSTP.

Contains 2 disulfide bonds. Expressed by the venom gland.

It is found in the secreted. Functionally, probable ion channel inhibitor. This chain is U5-hexatoxin-Hi1a, found in Hadronyche infensa (Fraser island funnel-web spider).